Reading from the N-terminus, the 1176-residue chain is Pesticidal crystal protein Cry1Cb (1176 aa).

This sequence belongs to the delta endotoxin family.

In terms of biological role, promotes colloidosmotic lysis by binding to the midgut epithelial cells of insects. Toxic to Spodoptera exigua and Trichoplusia ni. The sequence is that of Pesticidal crystal protein Cry1Cb (cry1Cb) from Bacillus thuringiensis subsp. galleriae.